A 457-amino-acid polypeptide reads, in one-letter code: ATP synthase subunit beta (457 aa).

An ATP-binding site is contributed by 147–154; sequence GGAGVGKT.

The protein belongs to the ATPase alpha/beta chains family. F-type ATPases have 2 components, CF(1) - the catalytic core - and CF(0) - the membrane proton channel. CF(1) has five subunits: alpha(3), beta(3), gamma(1), delta(1), epsilon(1). CF(0) has three main subunits: a(1), b(2) and c(9-12). The alpha and beta chains form an alternating ring which encloses part of the gamma chain. CF(1) is attached to CF(0) by a central stalk formed by the gamma and epsilon chains, while a peripheral stalk is formed by the delta and b chains.

Its subcellular location is the cell inner membrane. It carries out the reaction ATP + H2O + 4 H(+)(in) = ADP + phosphate + 5 H(+)(out). Its function is as follows. Produces ATP from ADP in the presence of a proton gradient across the membrane. The catalytic sites are hosted primarily by the beta subunits. This Haemophilus ducreyi (strain 35000HP / ATCC 700724) protein is ATP synthase subunit beta.